Consider the following 110-residue polypeptide: UPF0060 membrane protein MT2717 (110 aa).

Transmembrane regions (helical) follow at residues isoleucine 6 to glycine 26, glycine 32 to leucine 52, valine 61 to aspartate 81, and valine 90 to histidine 110.

It belongs to the UPF0060 family.

It localises to the cell membrane. The chain is UPF0060 membrane protein MT2717 from Mycobacterium tuberculosis (strain CDC 1551 / Oshkosh).